Reading from the N-terminus, the 272-residue chain is 2-dehydro-3-deoxyphosphooctonate aldolase (272 aa).

The protein belongs to the KdsA family.

It is found in the cytoplasm. It carries out the reaction D-arabinose 5-phosphate + phosphoenolpyruvate + H2O = 3-deoxy-alpha-D-manno-2-octulosonate-8-phosphate + phosphate. It functions in the pathway carbohydrate biosynthesis; 3-deoxy-D-manno-octulosonate biosynthesis; 3-deoxy-D-manno-octulosonate from D-ribulose 5-phosphate: step 2/3. The protein operates within bacterial outer membrane biogenesis; lipopolysaccharide biosynthesis. The chain is 2-dehydro-3-deoxyphosphooctonate aldolase from Geotalea uraniireducens (strain Rf4) (Geobacter uraniireducens).